We begin with the raw amino-acid sequence, 355 residues long: N5-carboxyaminoimidazole ribonucleotide synthase (355 aa).

ATP contacts are provided by residues Arg-80, Lys-120, 125-131 (GYDGRGQ), 153-156 (EQGI), Glu-161, His-184, and 237-238 (NE). The region spanning 84-267 (KQLFDKLHLP…QFELHLRAIT (184 aa)) is the ATP-grasp domain.

The protein belongs to the PurK/PurT family. As to quaternary structure, homodimer.

It catalyses the reaction 5-amino-1-(5-phospho-beta-D-ribosyl)imidazole + hydrogencarbonate + ATP = 5-carboxyamino-1-(5-phospho-D-ribosyl)imidazole + ADP + phosphate + 2 H(+). The protein operates within purine metabolism; IMP biosynthesis via de novo pathway; 5-amino-1-(5-phospho-D-ribosyl)imidazole-4-carboxylate from 5-amino-1-(5-phospho-D-ribosyl)imidazole (N5-CAIR route): step 1/2. Its function is as follows. Catalyzes the ATP-dependent conversion of 5-aminoimidazole ribonucleotide (AIR) and HCO(3)(-) to N5-carboxyaminoimidazole ribonucleotide (N5-CAIR). In Escherichia coli (strain K12), this protein is N5-carboxyaminoimidazole ribonucleotide synthase.